The primary structure comprises 445 residues: Glutamate--tRNA ligase 1 (445 aa).

A 'HIGH' region motif is present at residues 9 to 19 (PSPTGYLHVGN). Residues 238–242 (KISKR) carry the 'KMSKS' region motif. Residue lysine 241 participates in ATP binding.

Belongs to the class-I aminoacyl-tRNA synthetase family. Glutamate--tRNA ligase type 1 subfamily. Monomer.

Its subcellular location is the cytoplasm. The catalysed reaction is tRNA(Glu) + L-glutamate + ATP = L-glutamyl-tRNA(Glu) + AMP + diphosphate. In terms of biological role, catalyzes the attachment of glutamate to tRNA(Glu) in a two-step reaction: glutamate is first activated by ATP to form Glu-AMP and then transferred to the acceptor end of tRNA(Glu). This is Glutamate--tRNA ligase 1 from Ehrlichia ruminantium (strain Gardel).